The sequence spans 404 residues: Rhomboid-related protein 3 (404 aa).

2 EF-hand domains span residues 34–69 and 70–105; these read APEDHWKVLFDQFDPGNTGYISTGKFRSLLESHSSK and LDPHKREVLLALADSHADGQIGYQDFVSLMSNKRSN. The next 7 helical transmembrane spans lie at 164-184, 218-238, 250-270, 274-294, 303-325, 338-358, and 371-391; these read WFMITVTLLEVAFFLYNGVSL, IFMHAGIEHLGLNVVLQLLVG, IGLVYVAGVVAGSLAVSVADM, VVGSSGGVYALVSAHLANIVM, FKLLRMAVALICMSMEFGRAVWL, PSFVAHLGGVAVGITLGVVVL, and WWIFVAMYTVFVLFAVFWNIF. Ser278 acts as the Nucleophile in catalysis. Residue His343 is part of the active site.

The protein belongs to the peptidase S54 family.

Its subcellular location is the membrane. It catalyses the reaction Cleaves type-1 transmembrane domains using a catalytic dyad composed of serine and histidine that are contributed by different transmembrane domains.. Its function is as follows. May be involved in regulated intramembrane proteolysis and the subsequent release of functional polypeptides from their membrane anchors. The sequence is that of Rhomboid-related protein 3 (RHBDL3) from Homo sapiens (Human).